The following is a 205-amino-acid chain: Holliday junction branch migration complex subunit RuvA (205 aa).

Positions 1–64 are domain I; the sequence is MIGKLKGVVD…EDMIRLYGFR (64 aa). The interval 65 to 143 is domain II; that stretch reads SDAEREWFRL…AFAPVDPALV (79 aa). Residues 144-152 form a flexible linker region; that stretch reads RLAGAVEAR. Residues 153–205 are domain III; it reads TAPQPVADAISALVNLGYPQAQASAAVAAALQSAGAEAEAKTLIRLGLRELAR.

The protein belongs to the RuvA family. As to quaternary structure, homotetramer. Forms an RuvA(8)-RuvB(12)-Holliday junction (HJ) complex. HJ DNA is sandwiched between 2 RuvA tetramers; dsDNA enters through RuvA and exits via RuvB. An RuvB hexamer assembles on each DNA strand where it exits the tetramer. Each RuvB hexamer is contacted by two RuvA subunits (via domain III) on 2 adjacent RuvB subunits; this complex drives branch migration. In the full resolvosome a probable DNA-RuvA(4)-RuvB(12)-RuvC(2) complex forms which resolves the HJ.

It is found in the cytoplasm. Its function is as follows. The RuvA-RuvB-RuvC complex processes Holliday junction (HJ) DNA during genetic recombination and DNA repair, while the RuvA-RuvB complex plays an important role in the rescue of blocked DNA replication forks via replication fork reversal (RFR). RuvA specifically binds to HJ cruciform DNA, conferring on it an open structure. The RuvB hexamer acts as an ATP-dependent pump, pulling dsDNA into and through the RuvAB complex. HJ branch migration allows RuvC to scan DNA until it finds its consensus sequence, where it cleaves and resolves the cruciform DNA. The polypeptide is Holliday junction branch migration complex subunit RuvA (Methylobacterium sp. (strain 4-46)).